The following is a 122-amino-acid chain: Large ribosomal subunit protein uL18 (122 aa).

Belongs to the universal ribosomal protein uL18 family. As to quaternary structure, part of the 50S ribosomal subunit; part of the 5S rRNA/L5/L18/L25 subcomplex. Contacts the 5S and 23S rRNAs.

This is one of the proteins that bind and probably mediate the attachment of the 5S RNA into the large ribosomal subunit, where it forms part of the central protuberance. The protein is Large ribosomal subunit protein uL18 of Mycobacterium tuberculosis (strain ATCC 25177 / H37Ra).